Consider the following 456-residue polypeptide: Ribonuclease inhibitor (456 aa).

Position 1 is an N-acetylmethionine (Met1). 15 LRR repeats span residues 15–43 (WTEL…CKDI), 44–71 (GSAL…VHLV), 72–100 (LQGL…CGVL), 101–128 (PSTL…LRLL), 129–157 (CEGL…CEPL), 158–185 (ASVL…ARVL), 186–214 (GQGL…CKDL), 215–242 (CGIV…IAEL), 243–271 (CPGL…CRDL), 272–299 (CRVL…ARLL), 300–328 (CESL…CQHV), 329–356 (SLML…IQEL), 357–385 (CQAL…CSSL), 386–413 (ASLL…VLQL), and 414–442 (LGSL…EDRL). Ser86 bears the Phosphoserine mark.

In terms of assembly, forms high-affinity heterodimers with RNASE1, ANG and RNASE2.

The protein resides in the cytoplasm. The protein localises to the nucleus. Ribonuclease inhibitor which inhibits RNASE1, RNASE2 and angiogenin (ANG). May play a role in redox homeostasis. Required to inhibit the cytotoxic tRNA ribonuclease activity of ANG in the cytoplasm in absence of stress. Relocates to the nucleus in response to stress, relieving inhibition of ANG in the cytoplasm, and inhibiting the angiogenic activity of ANG in the nucleus. The protein is Ribonuclease inhibitor (RNH1) of Sus scrofa (Pig).